The chain runs to 215 residues: Protein ERP2 (215 aa).

A signal peptide spans 1 to 25; it reads MIKSTIALPSFFIVLILALVNSVAA. The Lumenal portion of the chain corresponds to 26–182; that stretch reads SSSYAPVAIS…TVNSTESRLT (157 aa). The GOLD domain maps to 41 to 123; the sequence is KECLYYDMVT…LKKVEITLEK (83 aa). The chain crosses the membrane as a helical span at residues 183–203; that stretch reads WLSILIIIIIAVISIAQVLLI. Residues 204–215 are Cytoplasmic-facing; sequence QFLFTGRQKNYV.

This sequence belongs to the EMP24/GP25L family. Associates with EMP24, ERV25 and ERP1.

Its subcellular location is the endoplasmic reticulum membrane. Its function is as follows. Involved in vesicular protein trafficking. The sequence is that of Protein ERP2 (ERP2) from Saccharomyces cerevisiae (strain ATCC 204508 / S288c) (Baker's yeast).